Reading from the N-terminus, the 401-residue chain is S-adenosylmethionine synthase (401 aa).

137-142 (GQGSGD) contacts ATP.

Belongs to the AdoMet synthase 2 family. Requires Mg(2+) as cofactor.

The catalysed reaction is L-methionine + ATP + H2O = S-adenosyl-L-methionine + phosphate + diphosphate. It participates in amino-acid biosynthesis; S-adenosyl-L-methionine biosynthesis; S-adenosyl-L-methionine from L-methionine: step 1/1. Catalyzes the formation of S-adenosylmethionine from methionine and ATP. This chain is S-adenosylmethionine synthase, found in Haloquadratum walsbyi (strain DSM 16790 / HBSQ001).